We begin with the raw amino-acid sequence, 230 residues long: Extracellular deoxyribonuclease (230 aa).

An N-terminal signal peptide occupies residues 1 to 20 (MFRPLLSLCLALLVSAPAHA).

Belongs to the EndA/NucM nuclease family.

Its subcellular location is the secreted. This Aeromonas hydrophila protein is Extracellular deoxyribonuclease (dns).